A 149-amino-acid chain; its full sequence is MAEQTFIMIKPDGVQRGLVGEIISRFEKKGFYLKGLKFVNVERAFAEKHYADLSAKPFFSGLVDYIISGPVVAMIWEGKNVVTTGRKIIGATNPAQSEPGTIRGDFAIDIGRNVIHGSDAVESANKEIALWFPEGAANWESSLHSWIYE.

The ATP site is built by Lys10, Phe58, Arg86, Thr92, Arg103, and Asn113. His116 serves as the catalytic Pros-phosphohistidine intermediate.

It belongs to the NDK family. The cofactor is Mg(2+).

The enzyme catalyses a 2'-deoxyribonucleoside 5'-diphosphate + ATP = a 2'-deoxyribonucleoside 5'-triphosphate + ADP. The catalysed reaction is a ribonucleoside 5'-diphosphate + ATP = a ribonucleoside 5'-triphosphate + ADP. Its function is as follows. Major role in the synthesis of nucleoside triphosphates other than ATP. The ATP gamma phosphate is transferred to the NDP beta phosphate via a ping-pong mechanism, using a phosphorylated active-site intermediate. This NDK is microtubule-associated. This chain is Nucleoside diphosphate kinase 1 (NDPK1), found in Pisum sativum (Garden pea).